The chain runs to 567 residues: Laccase-3 (567 aa).

A signal peptide spans 1–24 (MASSSSSRLLFLLSCSVLALLAGA). 2 Plastocyanin-like domains span residues 32–148 (IVQE…PREN) and 158–310 (REVP…YDCG). An N-linked (GlcNAc...) asparagine glycan is attached at Asn-78. His-82, His-84, His-127, and His-129 together coordinate Cu cation. N-linked (GlcNAc...) asparagine glycans are attached at residues Asn-148, Asn-187, Asn-203, Asn-298, Asn-330, Asn-379, and Asn-389. One can recognise a Plastocyanin-like 3 domain in the interval 415–551 (DFPAYPPVQF…AMAFLVEDGY (137 aa)). 7 residues coordinate Cu cation: His-468, His-471, His-473, His-530, Cys-531, His-532, and His-536.

Belongs to the multicopper oxidase family. The cofactor is Cu cation.

The protein localises to the secreted. Its subcellular location is the extracellular space. It localises to the apoplast. It carries out the reaction 4 hydroquinone + O2 = 4 benzosemiquinone + 2 H2O. Its function is as follows. Lignin degradation and detoxification of lignin-derived products. In Oryza sativa subsp. japonica (Rice), this protein is Laccase-3 (LAC3).